The primary structure comprises 81 residues: Sulfur carrier protein TusA (81 aa).

Catalysis depends on C19, which acts as the Cysteine persulfide intermediate.

It belongs to the sulfur carrier protein TusA family. In terms of assembly, interacts with IscS.

Its subcellular location is the cytoplasm. Its pathway is tRNA modification. In terms of biological role, sulfur carrier protein involved in sulfur trafficking in the cell. Part of a sulfur-relay system required for 2-thiolation during synthesis of 2-thiouridine of the modified wobble base 5-methylaminomethyl-2-thiouridine (mnm(5)s(2)U) in tRNA. Interacts with IscS and stimulates its cysteine desulfurase activity. Accepts an activated sulfur from IscS, which is then transferred to TusD, and thus determines the direction of sulfur flow from IscS to 2-thiouridine formation. Also appears to be involved in sulfur transfer for the biosynthesis of molybdopterin. The polypeptide is Sulfur carrier protein TusA (Serratia proteamaculans (strain 568)).